The chain runs to 436 residues: 3-ketoacyl-CoA thiolase (436 aa).

The active-site Acyl-thioester intermediate is the Cys99. Active-site proton acceptor residues include His392 and Cys422.

This sequence belongs to the thiolase-like superfamily. Thiolase family. In terms of assembly, heterotetramer of two alpha chains (FadJ) and two beta chains (FadI).

Its subcellular location is the cytoplasm. The catalysed reaction is an acyl-CoA + acetyl-CoA = a 3-oxoacyl-CoA + CoA. Its pathway is lipid metabolism; fatty acid beta-oxidation. Catalyzes the final step of fatty acid oxidation in which acetyl-CoA is released and the CoA ester of a fatty acid two carbons shorter is formed. This Yersinia enterocolitica serotype O:8 / biotype 1B (strain NCTC 13174 / 8081) protein is 3-ketoacyl-CoA thiolase.